A 390-amino-acid chain; its full sequence is cAMP-dependent protein kinase regulatory subunit (390 aa).

A compositionally biased stretch (polar residues) spans 1 to 17 (MSASGFTSPFGANSNPF). The disordered stretch occupies residues 1 to 81 (MSASGFTSPF…RPQNPDGYPA (81 aa)). The segment at 1–129 (MSASGFTSPF…RLKKAIQGNF (129 aa)) is dimerization and phosphorylation. S90 bears the Phosphoserine mark. 3',5'-cyclic AMP contacts are provided by residues 130–261 (LFSH…EEVP), E208, R217, 262–383 (ILST…GVEE), E329, and R338.

Belongs to the cAMP-dependent kinase regulatory chain family. In terms of assembly, tetramer, composed of 2 regulatory (R) and 2 catalytic (C) subunits. In the presence of cAMP it dissociates into 2 active monomeric C subunits and an R dimer.

This is cAMP-dependent protein kinase regulatory subunit (SUM1) from Pyricularia oryzae (strain 70-15 / ATCC MYA-4617 / FGSC 8958) (Rice blast fungus).